The primary structure comprises 765 residues: FHF complex subunit HOOK interacting protein 2A (765 aa).

Disordered stretches follow at residues threonine 193–serine 236 and threonine 532–glycine 561. 2 stretches are compositionally biased toward polar residues: residues glycine 196–arginine 208 and serine 535–proline 550.

Belongs to the FHIP family. As to expression, expressed in all tissues tested, highly expressed brain. Only detected at high levels in testis.

In terms of biological role, required for proper functioning of the nervous system. The chain is FHF complex subunit HOOK interacting protein 2A from Homo sapiens (Human).